Consider the following 372-residue polypeptide: MSMLGNIKTYAQTVTSLSDNDDTSIDRLNYVVTTSILIAFSLLLFAKNYVGEPMQCWTPNQFAGGWESFAESYCFIENTYFVPMQDSNLPAAETREGREMIYYQWVPFLLVIQALFFCVPRAFWIIYPSYSGLTIADMITAARQNGKQLEGADEALEQVAMINWRTEQQKGHGSRIFNCYLVMKLLILLNIVLQFFLLNSFLNTAYTFWGWGIFWDMVNGRHWQESGHFPRVSFCDINVRELGNIHHWSLQCVLMVNMFNEKIFIFLWFWFAFLLVATAGDFVIWVWRRFDSNSKLGFILDLLNQEGIDHSPQKASELYKNVLRDDGVLFLRLLDSNSGRLNSEELMKKIYNISVGHATDLNTPIEEHATSE.

4 helical membrane-spanning segments follow: residues 31–51 (VVTT…NYVG), 106–126 (VPFL…FWII), 181–201 (LVMK…LNSF), and 263–283 (IFIF…GDFV). An N-linked (GlcNAc...) asparagine glycan is attached at Asn352.

This sequence belongs to the pannexin family.

It localises to the cell membrane. The protein localises to the cell junction. Its subcellular location is the gap junction. In terms of biological role, structural component of the gap junctions. Required for signals downstream of defecation clock. The sequence is that of Innexin-16 (inx-16) from Caenorhabditis elegans.